The following is a 92-amino-acid chain: Elongation factor 1-beta (92 aa).

Belongs to the EF-1-beta/EF-1-delta family.

Its function is as follows. Promotes the exchange of GDP for GTP in EF-1-alpha/GDP, thus allowing the regeneration of EF-1-alpha/GTP that could then be used to form the ternary complex EF-1-alpha/GTP/AAtRNA. The polypeptide is Elongation factor 1-beta (Pyrobaculum neutrophilum (strain DSM 2338 / JCM 9278 / NBRC 100436 / V24Sta) (Thermoproteus neutrophilus)).